Consider the following 718-residue polypeptide: Kinesin-like protein KIF2C (718 aa).

The interval 1–248 is globular; sequence MESLPARLFP…CHPLTLTDPT (248 aa). Phosphoserine is present on residues Ser-3 and Ser-19. The interval 86-111 is disordered; sequence PKQKRRSVNSKIPAPKEGLRSRSTRM. At Ser-92 the chain carries Phosphoserine; by AURKB. The Microtubule tip localization signal signature appears at 95-98; sequence SKIP. Phosphoserine is present on residues Ser-106, Ser-108, Ser-112, Ser-163, and Ser-186. A negative regulator of microtubule-binding region spans residues 201–232; sequence EKRAQNSEIRIKRAQEYDSSFPNWEFARMIKE. The region spanning 252–582 is the Kinesin motor domain; the sequence is RICVCVRKRP…LRYADRVKEL (331 aa). ATP contacts are provided by residues Arg-258 and 342-349; that span reads GQTGSGKT. A Nuclear localization signal motif is present at residues 409–412; sequence KKAK. Ser-513 and Ser-626 each carry phosphoserine. 2 coiled-coil regions span residues 613-651 and 689-716; these read NFKEEEELSSQMSSFNEAMSQIRELEERAMEELREIIQQ and ALREVIKALRVAMQLEEQASKQMNSKKR.

It belongs to the TRAFAC class myosin-kinesin ATPase superfamily. Kinesin family. MCAK/KIF2 subfamily. Interacts with CENPH. Interacts with MTUS2/TIP150; the interaction is direct. Interacts with MAPRE1; the interaction is direct, regulated by phosphorylation and is probably required for targeting to growing microtubule plus ends. Interacts with KIF18B at microtubule tips; this interaction increases the affinity of both partners for microtubule plus ends and is required for robust microtubule depolymerization. Phosphorylation by AURKA or AURKB strongly reduces KIF18B-binding. In terms of processing, phosphorylation by AURKB, regulates association with centromeres and kinetochores and the microtubule depolymerization activity. Post-translationally, ubiquitinated.

Its subcellular location is the cytoplasm. It localises to the cytoskeleton. It is found in the nucleus. The protein resides in the chromosome. The protein localises to the centromere. Its subcellular location is the kinetochore. Its function is as follows. In complex with KIF18B, constitutes the major microtubule plus-end depolymerizing activity in mitotic cells. Regulates the turnover of microtubules at the kinetochore and functions in chromosome segregation during mitosis. Plays a role in chromosome congression and is required for the lateral to end-on conversion of the chromosome-microtubule attachment. In Cricetulus griseus (Chinese hamster), this protein is Kinesin-like protein KIF2C (KIF2C).